A 199-amino-acid chain; its full sequence is Recombination protein RecR (199 aa).

The C4-type zinc finger occupies 58–73 (CSICNNITDVDPCTYC). A Toprim domain is found at 81-176 (QVICVVEEPT…RVTRIATGVP (96 aa)).

This sequence belongs to the RecR family.

In terms of biological role, may play a role in DNA repair. It seems to be involved in an RecBC-independent recombinational process of DNA repair. It may act with RecF and RecO. The chain is Recombination protein RecR from Koribacter versatilis (strain Ellin345).